Here is a 2325-residue protein sequence, read N- to C-terminus: Centriolin (2325 aa).

Positions 1–33 (MKKGSQQKIFSKAKIPSSSHSPIPSSMSNMRSR) are disordered. The span at 16 to 33 (PSSSHSPIPSSMSNMRSR) shows a compositional bias: low complexity. LRR repeat units lie at residues 126–147 (KLEV…DKLL), 148–169 (KLRE…ENMC), 170–191 (NLQK…LGKK), and 194–215 (SLRV…SKLK). The region spanning 228 to 266 (NPVVTLPHYLQFTIFHLRSLESLEGQPVTTQDRQEAFER) is the LRRCT domain. Coiled coils occupy residues 267-343 (FSLE…IELT) and 435-799 (LDTQ…LNHV). S831 carries the post-translational modification Phosphoserine. Residues 851-1101 (LARSKWERDE…ARLQNVLDLT (251 aa)) adopt a coiled-coil conformation. The tract at residues 1150-1241 (PSSKVSSHSS…DQEEPPFVPP (92 aa)) is disordered. Acidic residues predominate over residues 1224–1235 (SQEESELDDQEE). A coiled-coil region spans residues 1317 to 2255 (EHHNLENEVS…DRLKAQLRHC (939 aa)). A Phosphoserine modification is found at S1475. Residues 1948–2118 (MMFQRLQKER…ELVAQDNHER (171 aa)) form a required for centrosome localization region. A sufficient for interaction with HOOK2 region spans residues 1985–2325 (QKSKLDQVLS…QNQEKNASAR (341 aa)). The disordered stretch occupies residues 2288–2325 (VTSTSADSASSPSLSQLESSLTEDSQLGQNQEKNASAR). A compositionally biased stretch (low complexity) spans 2290 to 2314 (STSADSASSPSLSQLESSLTEDSQL). Residues 2315–2325 (GQNQEKNASAR) show a composition bias toward polar residues.

Interacts with HOOK2. Interacts with EXOC6 and SNAPIN. Associates with the exocyst complex. In terms of tissue distribution, widely expressed with highest levels in testis and trachea.

It is found in the cytoplasm. The protein resides in the cytoskeleton. The protein localises to the microtubule organizing center. Its subcellular location is the centrosome. It localises to the midbody. It is found in the midbody ring. Its function is as follows. Involved in cell cycle progression and cytokinesis. During the late steps of cytokinesis, anchors exocyst and SNARE complexes at the midbody, thereby allowing secretory vesicle-mediated abscission. The protein is Centriolin (CNTRL) of Homo sapiens (Human).